The sequence spans 184 residues: ATP-dependent protease subunit HslV (184 aa).

Thr12 is a catalytic residue. The Na(+) site is built by Ala166, Cys169, and Thr172.

Belongs to the peptidase T1B family. HslV subfamily. As to quaternary structure, a double ring-shaped homohexamer of HslV is capped on each side by a ring-shaped HslU homohexamer. The assembly of the HslU/HslV complex is dependent on binding of ATP.

It localises to the cytoplasm. The catalysed reaction is ATP-dependent cleavage of peptide bonds with broad specificity.. Allosterically activated by HslU binding. Its function is as follows. Protease subunit of a proteasome-like degradation complex believed to be a general protein degrading machinery. The protein is ATP-dependent protease subunit HslV of Brucella canis (strain ATCC 23365 / NCTC 10854 / RM-666).